We begin with the raw amino-acid sequence, 450 residues long: Involucrin (450 aa).

Residues Met-1–Leu-19 show a composition bias toward polar residues. 3 disordered regions span residues Met-1–Pro-43, Gln-77–Lys-370, and Pro-422–Val-450. The segment covering Gln-86–Lys-108 has biased composition (basic and acidic residues). Positions Gly-120 to Leu-135 are enriched in low complexity. Composition is skewed to basic and acidic residues over residues Leu-187–Leu-200 and Gln-264–Leu-281. Residues Gly-295–Thr-344 show a composition bias toward low complexity. The segment covering Ala-345–Lys-370 has biased composition (basic and acidic residues).

Belongs to the involucrin family. Directly or indirectly cross-linked to cornifelin (CNFN). In terms of processing, substrate of transglutaminase. Specific glutamines or lysines are cross-linked to keratins, desmoplakin and to inter involucrin molecules. Keratinocytes of epidermis and other stratified squamous epithelia.

It localises to the cytoplasm. Functionally, part of the insoluble cornified cell envelope (CE) of stratified squamous epithelia. The polypeptide is Involucrin (IVL) (Lemur catta (Ring-tailed lemur)).